A 282-amino-acid chain; its full sequence is Probable endonuclease 4 (282 aa).

His-69, His-109, Glu-144, Asp-178, His-181, His-215, Asp-228, His-230, and Glu-260 together coordinate Zn(2+).

It belongs to the AP endonuclease 2 family. It depends on Zn(2+) as a cofactor.

The catalysed reaction is Endonucleolytic cleavage to 5'-phosphooligonucleotide end-products.. In terms of biological role, endonuclease IV plays a role in DNA repair. It cleaves phosphodiester bonds at apurinic or apyrimidinic (AP) sites, generating a 3'-hydroxyl group and a 5'-terminal sugar phosphate. The protein is Probable endonuclease 4 of Thermosipho africanus (strain TCF52B).